The primary structure comprises 455 residues: Beta-cyclopiazonate dehydrogenase (455 aa).

Residues methionine 1 to alanine 20 form the signal peptide.

It belongs to the beta-cyclopiazonate dehydrogenase family. FAD is required as a cofactor.

It carries out the reaction beta-cyclopiazonate + A = alpha-cyclopiazonate + AH2. Its function is as follows. Beta-cyclopiazonate dehydrogenase involved in the synthesis of the fungal neurotoxin alpha-cyclopiazonic acid (CPA). CpaO carries out the dehydrogenation of beta-CPA to yield an unstable enimine product, which is captured by intramolecular cyclization to create the pentacyclic fused scaffold of alpha-cyclopiazonate. This is Beta-cyclopiazonate dehydrogenase from Aspergillus flavus (strain ATCC 200026 / FGSC A1120 / IAM 13836 / NRRL 3357 / JCM 12722 / SRRC 167).